The sequence spans 343 residues: WAT1-related protein At1g43650 (343 aa).

The next 10 helical transmembrane spans lie at 9 to 29, 36 to 56, 65 to 85, 98 to 118, 130 to 150, 175 to 195, 209 to 229, 239 to 259, 272 to 292, and 296 to 316; these read MAMVFVQIVYAGMPLLSKVAI, FVFVFYRQAFAALALSPFAFF, LSFILLLKIFFISLCGLTLSL, TFAAATTNAIPSITFVLALLF, GVAKVTGSMVGMLGALVFAFV, SVKGSITMLAANTCWCLWIIM, LVALQCLFSCIQSAVWAVAVN, FGLPLLSMAYCGIMVTGLTYW, FTALYTPLALILTCIVSSFLF, and FYLGSVGGAVLLVCGLYLGLW. EamA domains follow at residues 16-139 and 188-313; these read IVYA…GSMV and CWCL…GLYL.

It belongs to the drug/metabolite transporter (DMT) superfamily. Plant drug/metabolite exporter (P-DME) (TC 2.A.7.4) family.

Its subcellular location is the membrane. This chain is WAT1-related protein At1g43650, found in Arabidopsis thaliana (Mouse-ear cress).